An 838-amino-acid chain; its full sequence is MGNGLWFVGVIILGVAWGQVHDWTEQTDPWFLDGLGMDRMYWRDTNTGRLWLPNTPDPQKPPRGFLAPPDELNLTTASLPLLRWYEERFCFVLVTTAEFPRDPGQLLYIPKTYLLGRPPNASLPAPTTVEPTAQPPPSVAPLKGLLHNPAASVLLRSRAWVTFSAVPDPEALTFPRGDNVATASHPSGPRDTPPPRPPVGARRHPTTELDITHLHNASTTWLATRGLLRSPGRYVYFSPSASTWPVGIWTTGELVLGCDAALVRARYGREFMGLVISMHDSPPVEVMVVPAGQTLDRVGDPADENPPGALPGPPGGPRYRVFVLGSLTRADNGSALDALRRVGGYPEEGTNYAQFLSRAYAEFFSGDAGAEQGPRPPLFWRLTGLLATSGFAFVNAAHANGAVCLSDLLGFLAHSRALAGLAARGAAGCAADSVFFNVSVLDPTARLQLEARLQHLVAEILEREQSLALHALGYQLAFVLDSPSAYDAVAPSAAHLIDALYAEFLGGRVLTTPVVHRALFYASAVLRQPFLAGVPSAVQRERARRSLLIASALCTSDVAAATNADLRTALARADHQKTLFWLPDHFSPCAASLRFDLDESVFILDALAQATRSETPVEVLAQQTHGLASTLTRWAHYNALIRAFVPEASHRCGGQSANVEPRILVPITHNASYVVTHSPLPRGIGYKLTGVDVRRPLFLTYLTATCEGSTRDIESKRLVRTQNQRDLGLVGAVFMRYTPAGEVMSVLLVDTDNTQQQIAAGPTEGAPSVFSSDVPSTALLLFPNGTVIHLLAFDTQPVAAIAPGFLAASALGVVMITAALAGILKVLRTSVPFFWRRE.

The N-terminal stretch at 1–18 (MGNGLWFVGVIILGVAWG) is a signal peptide. Residues 19-803 (QVHDWTEQTD…DTQPVAAIAP (785 aa)) lie on the Virion surface side of the membrane. N-linked (GlcNAc...) asparagine; by host glycans are attached at residues Asn-73 and Asn-120. A disordered region spans residues 174–204 (FPRGDNVATASHPSGPRDTPPPRPPVGARRH). N-linked (GlcNAc...) asparagine; by host glycosylation is present at Asn-216. The segment at 259-323 (DAALVRARYG…PGGPRYRVFV (65 aa)) is interaction with gL. N-linked (GlcNAc...) asparagine; by host glycosylation is found at Asn-332, Asn-437, Asn-670, and Asn-784. Residues 804-824 (GFLAASALGVVMITAALAGIL) traverse the membrane as a helical segment. Residues 825-838 (KVLRTSVPFFWRRE) are Intravirion-facing.

The protein belongs to the herpesviridae glycoprotein H family. Interacts with glycoprotein L (gL); this interaction is necessary for the correct processing and cell surface expression of gH. The heterodimer gH/gL seems to interact with gB trimers during fusion. Associates with the gB-gH/gL-gD complex. Interacts with VP16. N-glycosylated, O-glycosylated, and sialylated.

The protein localises to the virion membrane. It is found in the host cell membrane. The protein resides in the host endosome membrane. Functionally, the heterodimer glycoprotein H-glycoprotein L is required for the fusion of viral and plasma membranes leading to virus entry into the host cell. Following initial binding to host receptor, membrane fusion is mediated by the fusion machinery composed of gB and the heterodimer gH/gL. May also be involved in the fusion between the virion envelope and the outer nuclear membrane during virion morphogenesis. This is Envelope glycoprotein H from Human herpesvirus 1 (strain 17) (HHV-1).